The primary structure comprises 424 residues: Ribulose bisphosphate carboxylase (424 aa).

The active-site Proton acceptor is the Lys-159. Lys-161 contributes to the substrate binding site. Mg(2+)-binding residues include Lys-185, Asp-187, and Glu-188. Position 185 is an N6-carboxylysine (Lys-185). His-277 acts as the Proton acceptor in catalysis. Residues Arg-278, His-310, Ser-347–Gly-349, and Gln-369–Gly-372 each bind substrate.

It belongs to the RuBisCO large chain family. Type III subfamily. Homodimer or homodecamer. In contrast to form I RuBisCO, the form III RuBisCO is composed solely of large subunits. It depends on Mg(2+) as a cofactor.

The catalysed reaction is 2 (2R)-3-phosphoglycerate + 2 H(+) = D-ribulose 1,5-bisphosphate + CO2 + H2O. It catalyses the reaction D-ribulose 1,5-bisphosphate + O2 = 2-phosphoglycolate + (2R)-3-phosphoglycerate + 2 H(+). In terms of biological role, catalyzes the addition of molecular CO(2) and H(2)O to ribulose 1,5-bisphosphate (RuBP), generating two molecules of 3-phosphoglycerate (3-PGA). Functions in an archaeal AMP degradation pathway, together with AMP phosphorylase and R15P isomerase. This chain is Ribulose bisphosphate carboxylase, found in Pyrococcus abyssi (strain GE5 / Orsay).